Here is a 394-residue protein sequence, read N- to C-terminus: MAKEKFERNKPHVNVGTIGHVDHGKTTLTAAISAVLTKVHGGEVKDFAQIDNAPEERERGITINTSHIEYDTEARHYAHVDCPGHADYIKNMITGAAQMDGAILVVAATDGPMPQTREHILLSRQVGVPFIIVFMNKCDVVDDEELLELVEMEVRELLSEYDFPGDDLPVIQGSALGALQGDEAWEAKIIELADALDTYIPEPERAIDGAFIMPIEDVFSISGRGTVVTGRVERGIIKIGEEVEVVGIRDTQKSTCTGVEMFRKLLDEGRAGENCGVLLRGLKREDVERGQVLCAPGSILPHTKFESEVYVLSKDEGGRHTPFFKGYRPQFYFRTTDITGAVELPEGVEMVMPGDNLKFVVELINPVAMDEGLRFAIREGGRTVGAGVVSKIMA.

Positions 10–204 (KPHVNVGTIG…ALDTYIPEPE (195 aa)) constitute a tr-type G domain. Positions 19–26 (GHVDHGKT) are G1. Residue 19-26 (GHVDHGKT) participates in GTP binding. Position 26 (threonine 26) interacts with Mg(2+). The tract at residues 60 to 64 (GITIN) is G2. The G3 stretch occupies residues 81 to 84 (DCPG). Residues 81–85 (DCPGH) and 136–139 (NKCD) each bind GTP. Residues 136–139 (NKCD) are G4. The interval 174–176 (SAL) is G5.

This sequence belongs to the TRAFAC class translation factor GTPase superfamily. Classic translation factor GTPase family. EF-Tu/EF-1A subfamily. As to quaternary structure, monomer.

The protein localises to the cytoplasm. The catalysed reaction is GTP + H2O = GDP + phosphate + H(+). In terms of biological role, GTP hydrolase that promotes the GTP-dependent binding of aminoacyl-tRNA to the A-site of ribosomes during protein biosynthesis. The polypeptide is Elongation factor Tu (Colwellia psychrerythraea (strain 34H / ATCC BAA-681) (Vibrio psychroerythus)).